Consider the following 340-residue polypeptide: Phosphoribosylformylglycinamidine cyclo-ligase (340 aa).

Belongs to the AIR synthase family.

The protein resides in the cytoplasm. The catalysed reaction is 2-formamido-N(1)-(5-O-phospho-beta-D-ribosyl)acetamidine + ATP = 5-amino-1-(5-phospho-beta-D-ribosyl)imidazole + ADP + phosphate + H(+). It participates in purine metabolism; IMP biosynthesis via de novo pathway; 5-amino-1-(5-phospho-D-ribosyl)imidazole from N(2)-formyl-N(1)-(5-phospho-D-ribosyl)glycinamide: step 2/2. This chain is Phosphoribosylformylglycinamidine cyclo-ligase, found in Streptococcus pneumoniae (strain Taiwan19F-14).